A 363-amino-acid chain; its full sequence is Small ribosomal subunit biogenesis GTPase RsgA (363 aa).

Residues 112–268 enclose the CP-type G domain; sequence HQQVIAANID…LIDTPGMREL (157 aa). GTP-binding positions include 157 to 160 and 210 to 218; these read TKAD and GSSGAGKST. Residues Cys291, Cys296, His298, and Cys304 each contribute to the Zn(2+) site. Residues 340 to 363 form a disordered region; that stretch reads RVAQNNRGKGSGKRPASVDRPGRR.

It belongs to the TRAFAC class YlqF/YawG GTPase family. RsgA subfamily. In terms of assembly, monomer. Associates with 30S ribosomal subunit, binds 16S rRNA. The cofactor is Zn(2+).

It localises to the cytoplasm. One of several proteins that assist in the late maturation steps of the functional core of the 30S ribosomal subunit. Helps release RbfA from mature subunits. May play a role in the assembly of ribosomal proteins into the subunit. Circularly permuted GTPase that catalyzes slow GTP hydrolysis, GTPase activity is stimulated by the 30S ribosomal subunit. The polypeptide is Small ribosomal subunit biogenesis GTPase RsgA (Xanthomonas euvesicatoria pv. vesicatoria (strain 85-10) (Xanthomonas campestris pv. vesicatoria)).